We begin with the raw amino-acid sequence, 428 residues long: Enolase (428 aa).

(2R)-2-phosphoglycerate is bound at residue glutamine 163. Glutamate 205 serves as the catalytic Proton donor. Residues aspartate 242, glutamate 285, and aspartate 312 each contribute to the Mg(2+) site. The (2R)-2-phosphoglycerate site is built by lysine 337, arginine 366, serine 367, and lysine 388. Lysine 337 (proton acceptor) is an active-site residue.

It belongs to the enolase family. Mg(2+) is required as a cofactor.

The protein localises to the cytoplasm. The protein resides in the secreted. Its subcellular location is the cell surface. The enzyme catalyses (2R)-2-phosphoglycerate = phosphoenolpyruvate + H2O. It participates in carbohydrate degradation; glycolysis; pyruvate from D-glyceraldehyde 3-phosphate: step 4/5. Its function is as follows. Catalyzes the reversible conversion of 2-phosphoglycerate (2-PG) into phosphoenolpyruvate (PEP). It is essential for the degradation of carbohydrates via glycolysis. The chain is Enolase from Neisseria meningitidis serogroup C / serotype 2a (strain ATCC 700532 / DSM 15464 / FAM18).